The chain runs to 252 residues: Ribosomal RNA small subunit methyltransferase NEP1 (252 aa).

S-adenosyl-L-methionine is bound by residues L180, G207, 212-214 (GKD), and 227-232 (LSNYPL).

Belongs to the class IV-like SAM-binding methyltransferase superfamily. RNA methyltransferase NEP1 family. In terms of assembly, homodimer. Interacts with snoRNA U3. Interacts with NOP14 and MPP10. Component of the ribosomal small subunit (SSU) processome composed of at least 40 protein subunits and snoRNA U3.

It localises to the nucleus. Its subcellular location is the nucleolus. The enzyme catalyses pseudouridine(1191) in yeast 18S rRNA + S-adenosyl-L-methionine = N(1)-methylpseudouridine(1191) in yeast 18S rRNA + S-adenosyl-L-homocysteine + H(+). Functionally, S-adenosyl-L-methionine-dependent pseudouridine N(1)-methyltransferase that methylates pseudouridine at position 1189 (Psi1189) in 18S rRNA. Involved the biosynthesis of the hypermodified N1-methyl-N3-(3-amino-3-carboxypropyl) pseudouridine (m1acp3-Psi) conserved in eukaryotic 18S rRNA. N1-methylation is independent on acp-modification at the N3-position of U1191. Also has an essential role in 40S ribosomal subunit biogenesis independent on its methyltransferase activity, facilitating the incorporation of ribosomal protein S19 (RPS19A/RPS19B) during the formation of pre-ribosomes. The sequence is that of Ribosomal RNA small subunit methyltransferase NEP1 from Saccharomyces cerevisiae (strain ATCC 204508 / S288c) (Baker's yeast).